The following is a 64-amino-acid chain: DNA gyrase inhibitor YacG (64 aa).

The Zn(2+) site is built by Cys9, Cys12, Cys28, and Cys32. Positions 45–64 (KRIPSAGDLSDSDDWSEQQP) are disordered. Residues 54-64 (SDSDDWSEQQP) are compositionally biased toward acidic residues.

This sequence belongs to the DNA gyrase inhibitor YacG family. In terms of assembly, interacts with GyrB. Requires Zn(2+) as cofactor.

Its function is as follows. Inhibits all the catalytic activities of DNA gyrase by preventing its interaction with DNA. Acts by binding directly to the C-terminal domain of GyrB, which probably disrupts DNA binding by the gyrase. In Klebsiella pneumoniae subsp. pneumoniae (strain ATCC 700721 / MGH 78578), this protein is DNA gyrase inhibitor YacG.